The primary structure comprises 770 residues: Glutamate carboxypeptidase 2 homolog (770 aa).

At 1 to 25 (MPYVGVGAQTVSTSLTGAPMVKAYI) the chain is on the cytoplasmic side. A helical; Signal-anchor for type II membrane protein membrane pass occupies residues 26-42 (AIAASLIFVFCIAALGV). Residues 43–770 (HHSERKFNKF…CVVNTLRDVI (728 aa)) lie on the Extracellular side of the membrane. Residues Asn-175 and Asn-337 are each glycosylated (N-linked (GlcNAc...) asparagine). The tract at residues 282 to 597 (SKKELFKGRT…QYWAELAKTF (316 aa)) is catalytic. Zn(2+) contacts are provided by His-387 and Asp-397. N-linked (GlcNAc...) asparagine glycosylation is present at Asn-417. Residue Glu-435 is the Nucleophile of the active site. 2 residues coordinate Zn(2+): Glu-436 and Asp-464. Residues Asn-469, Asn-546, and Asn-551 are each glycosylated (N-linked (GlcNAc...) asparagine). His-562 is a binding site for Zn(2+). 3 N-linked (GlcNAc...) asparagine glycosylation sites follow: Asn-579, Asn-606, and Asn-630.

This sequence belongs to the peptidase M28 family. M28B subfamily. Zn(2+) serves as cofactor.

Its subcellular location is the membrane. The catalysed reaction is Release of an unsubstituted, C-terminal glutamyl residue, typically from Ac-Asp-Glu or folylpoly-gamma-glutamates.. This chain is Glutamate carboxypeptidase 2 homolog, found in Caenorhabditis elegans.